A 184-amino-acid polypeptide reads, in one-letter code: CASP-like protein 1U2 (184 aa).

Residues 1-16 are Cytoplasmic-facing; sequence MSYGCQVSDDEPNGSK. Residues 17–37 form a helical membrane-spanning segment; the sequence is AVSLLLRLSTLALALTSAVVM. Topologically, residues 38-62 are extracellular; that stretch reads ATASECTVVQLNGVVATITYKDFPP. A helical membrane pass occupies residues 63-83; the sequence is FVYLVGFNIAAAMLEAAAIYL. At 84–100 the chain is on the cytoplasmic side; it reads RLSTGGGDDDDEGFKGK. The helical transmembrane segment at 101 to 121 threads the bilayer; sequence LPGILLVVIDVAVQALVYTAT. At 122–153 the chain is on the extracellular side; sequence GGAFAAVSAYGPQINACGAGAGRFCGQVHQSK. The chain crosses the membrane as a helical span at residues 154 to 174; sequence LLSFAGSAAVGLAVVFRDVSL. Residues 175–184 are Cytoplasmic-facing; sequence PFSLWPTSSD.

The protein belongs to the Casparian strip membrane proteins (CASP) family. In terms of assembly, homodimer and heterodimers.

The protein resides in the cell membrane. The protein is CASP-like protein 1U2 of Oryza sativa subsp. japonica (Rice).